We begin with the raw amino-acid sequence, 110 residues long: Phosphoribosyl-ATP pyrophosphatase (110 aa).

This sequence belongs to the PRA-PH family.

It is found in the cytoplasm. The catalysed reaction is 1-(5-phospho-beta-D-ribosyl)-ATP + H2O = 1-(5-phospho-beta-D-ribosyl)-5'-AMP + diphosphate + H(+). It functions in the pathway amino-acid biosynthesis; L-histidine biosynthesis; L-histidine from 5-phospho-alpha-D-ribose 1-diphosphate: step 2/9. The polypeptide is Phosphoribosyl-ATP pyrophosphatase (Pseudomonas syringae pv. tomato (strain ATCC BAA-871 / DC3000)).